Here is a 464-residue protein sequence, read N- to C-terminus: Na(+)/H(+) antiporter NhaA 1 (464 aa).

11 helical membrane passes run 41-61 (GGLI…SPLA), 85-105 (LHHW…GLEL), 121-141 (VLPI…YMSL), 150-170 (GWGI…ALLA), 180-200 (FLVA…AVFY), 207-227 (SFLI…MIGI), 234-254 (FFVG…ATLA), 329-349 (VAFF…IDFG), 363-383 (VVFG…WLAI), 399-419 (IIGA…IAEL), and 428-448 (IIQA…AGYL).

This sequence belongs to the NhaA Na(+)/H(+) (TC 2.A.33) antiporter family.

Its subcellular location is the cell inner membrane. It carries out the reaction Na(+)(in) + 2 H(+)(out) = Na(+)(out) + 2 H(+)(in). Na(+)/H(+) antiporter that extrudes sodium in exchange for external protons. The chain is Na(+)/H(+) antiporter NhaA 1 from Saccharophagus degradans (strain 2-40 / ATCC 43961 / DSM 17024).